A 132-amino-acid chain; its full sequence is Small ribosomal subunit protein uS8 (132 aa).

It belongs to the universal ribosomal protein uS8 family. In terms of assembly, part of the 30S ribosomal subunit. Contacts proteins S5 and S12.

Its function is as follows. One of the primary rRNA binding proteins, it binds directly to 16S rRNA central domain where it helps coordinate assembly of the platform of the 30S subunit. The protein is Small ribosomal subunit protein uS8 of Psychrobacter cryohalolentis (strain ATCC BAA-1226 / DSM 17306 / VKM B-2378 / K5).